The following is a 925-amino-acid chain: MGSCFSFQIAVGDQTMNRIFDCLIGKSYIRTLEKNLRALQREMEDLRATQHEVQNKVAREESRHQQRLEAVQVWLDRVNSIDIECKDLLSVSPVELQKLCLCGLCTKYVCSSYKYGKKVFLLLEEVKILKSEGNFDEVSQPPPRSEVEERPTQPTIGQEEMLEKAWNRLMEDGVGIMGLHGMGGVGKTTLFKKIHNKFAEIGGTFDIVIWIVVSQGAKLSKLQEDIAEKLHLCDDLWKNKNESDKATDIHRVLKGKRFVLMLDDIWEKVDLEAIGIPYPSEVNKCKVAFTTRSREVCGEMGDHKPMQVNCLEPEDAWELFKNKVGDNTLSSDPVIVGLAREVAQKCRGLPLALNVIGETMASKTMVQEWEYAIDVLTRSAAEFSGMENKILPILKYSYDSLGDEHIKSCFLYCALFPEDGQIYTETLIDKLICEGFIGEDQVIKRARNKGYAMLGTLTRANLLTKVGTELANLLTKVSIYHCVMHDVVREMALWIASDFGKQKENFVVQASAGLHEIPEVKDWGAVRRMSLMRNEIEEITCESKCSELTTLFLQSNQLKNLSGEFIRYMQKLVVLDLSDNRDFNELPEQISGLVSLQYLDLSFTRIEQLPVGLKELKKLTFLDLAYTARLCSISGISRLLSLRVLSLLGSKVHGDASVLKELQQLENLQDLAITLSAELISLDQRLAKVISILGIEGFLQKPFDLSFLASMENLSSLWVKNSYFSEIKCRESETDSSYLHINPKIPCFTNLSRLDIVKCHSMKDLTWILFAPNLVVLFIEDSREVGEIINKEKATNLTSITPFLKLERLILCYLPKLESIYWSPLPFPLLLNIDVEECPKLRKLPLNATSAPKVEEFRILMYPPELEWEDEDTKNRFLPEMVSTSTSSKDPLLRNGIPRCLKSESTLLLLILLYLSSCRAFGLYN.

Residues Gly-25–Glu-69 are a coiled coil. The segment at Asn-134–Pro-154 is disordered. Positions Ser-139–Val-442 constitute an NB-ARC domain. ATP is bound at residue Gly-181–Thr-188. LRR repeat units follow at residues Ala-525–Ser-546, Glu-547–Tyr-568, Lys-571–Val-594, Ser-595–Lys-617, Lys-618–Leu-640, and Ser-641–Gln-663.

The protein belongs to the disease resistance NB-LRR family.

Its function is as follows. Probable disease resistance protein. The sequence is that of Probable disease resistance protein At1g61310 from Arabidopsis thaliana (Mouse-ear cress).